Consider the following 178-residue polypeptide: CASP-like protein 2A2 (178 aa).

Over 1–22 the chain is Cytoplasmic; it reads MDKTDQTAIDESALVLNRTEKS. The chain crosses the membrane as a helical span at residues 23–43; the sequence is AEAVLRVASMALSITGLVIMI. At 44–69 the chain is on the extracellular side; the sequence is KNSISNEFGSVSYSNIGAFMYLVSAN. A helical transmembrane segment spans residues 70–90; it reads GVCAAYSLLSALAILALPCPI. Over 91–96 the chain is Cytoplasmic; the sequence is SKVQVR. A helical transmembrane segment spans residues 97–117; that stretch reads TLFLLDQVVTYVVLAAGAVSA. The Extracellular portion of the chain corresponds to 118–145; it reads ETVYLAYYGNIPITWSSACDSYGSFCHN. A helical membrane pass occupies residues 146-166; the sequence is ALISVVFTFVVSLLYMLLSLI. The Cytoplasmic segment spans residues 167–178; it reads SSYRLFTRFEAP.

The protein belongs to the Casparian strip membrane proteins (CASP) family. In terms of assembly, homodimer and heterodimers. Mostly expressed in flowers and buds and, to a lower extent, in roots and yellow siliques. Localized in the floral organ abscission zone.

It is found in the cell membrane. In terms of biological role, involved in floral organ shedding. This chain is CASP-like protein 2A2, found in Arabidopsis thaliana (Mouse-ear cress).